A 961-amino-acid chain; its full sequence is Glycine dehydrogenase (decarboxylating) (961 aa).

Lys709 carries the N6-(pyridoxal phosphate)lysine modification.

This sequence belongs to the GcvP family. In terms of assembly, the glycine cleavage system is composed of four proteins: P, T, L and H. Pyridoxal 5'-phosphate serves as cofactor.

It carries out the reaction N(6)-[(R)-lipoyl]-L-lysyl-[glycine-cleavage complex H protein] + glycine + H(+) = N(6)-[(R)-S(8)-aminomethyldihydrolipoyl]-L-lysyl-[glycine-cleavage complex H protein] + CO2. Its function is as follows. The glycine cleavage system catalyzes the degradation of glycine. The P protein binds the alpha-amino group of glycine through its pyridoxal phosphate cofactor; CO(2) is released and the remaining methylamine moiety is then transferred to the lipoamide cofactor of the H protein. This is Glycine dehydrogenase (decarboxylating) from Streptomyces griseus subsp. griseus (strain JCM 4626 / CBS 651.72 / NBRC 13350 / KCC S-0626 / ISP 5235).